Consider the following 354-residue polypeptide: Uroporphyrinogen decarboxylase (354 aa).

Residues 27–31 (RQAGR), Asp77, Tyr154, Thr209, and His327 each bind substrate.

The protein belongs to the uroporphyrinogen decarboxylase family. In terms of assembly, homodimer.

Its subcellular location is the cytoplasm. It catalyses the reaction uroporphyrinogen III + 4 H(+) = coproporphyrinogen III + 4 CO2. Its pathway is porphyrin-containing compound metabolism; protoporphyrin-IX biosynthesis; coproporphyrinogen-III from 5-aminolevulinate: step 4/4. Its function is as follows. Catalyzes the decarboxylation of four acetate groups of uroporphyrinogen-III to yield coproporphyrinogen-III. This Salmonella heidelberg (strain SL476) protein is Uroporphyrinogen decarboxylase.